Reading from the N-terminus, the 241-residue chain is Guanosine phosphorylase (241 aa).

This sequence belongs to the PNP/UDP phosphorylase family.

It carries out the reaction guanosine + phosphate = alpha-D-ribose 1-phosphate + guanine. It catalyses the reaction a purine D-ribonucleoside + phosphate = a purine nucleobase + alpha-D-ribose 1-phosphate. The catalysed reaction is inosine + phosphate = alpha-D-ribose 1-phosphate + hypoxanthine. The enzyme catalyses adenosine + phosphate = alpha-D-ribose 1-phosphate + adenine. Activity is higher at low KCl concentrations. Its function is as follows. Phosphorylase involved in the non-carboxylating pentose bisphosphate pathway, a nucleoside degradation pathway present in some halophilic archaea. Catalyzes the phosphorolytic cleavage of guanosine to guanine and ribose-1-phosphate (R1P). Exhibits the highest activity toward guanosine, but also shows lower activity against inosine and adenosine. In Halorubrum lacusprofundi (strain ATCC 49239 / DSM 5036 / JCM 8891 / ACAM 34), this protein is Guanosine phosphorylase.